We begin with the raw amino-acid sequence, 200 residues long: Holliday junction branch migration complex subunit RuvA (200 aa).

The tract at residues 1–64 (MIGHLRGIIV…EDAHTLYGFH (64 aa)) is domain I. The segment at 65–143 (NDHERRLFRA…RWHTNDTPSP (79 aa)) is domain II. The flexible linker stretch occupies residues 144-148 (EGLRS). A domain III region spans residues 149-200 (SNTQPTQDAISALMALGYKPQEAKRAIDAIQKPDLSAETLIRLALKQMVLGT).

The protein belongs to the RuvA family. In terms of assembly, homotetramer. Forms an RuvA(8)-RuvB(12)-Holliday junction (HJ) complex. HJ DNA is sandwiched between 2 RuvA tetramers; dsDNA enters through RuvA and exits via RuvB. An RuvB hexamer assembles on each DNA strand where it exits the tetramer. Each RuvB hexamer is contacted by two RuvA subunits (via domain III) on 2 adjacent RuvB subunits; this complex drives branch migration. In the full resolvosome a probable DNA-RuvA(4)-RuvB(12)-RuvC(2) complex forms which resolves the HJ.

Its subcellular location is the cytoplasm. The RuvA-RuvB-RuvC complex processes Holliday junction (HJ) DNA during genetic recombination and DNA repair, while the RuvA-RuvB complex plays an important role in the rescue of blocked DNA replication forks via replication fork reversal (RFR). RuvA specifically binds to HJ cruciform DNA, conferring on it an open structure. The RuvB hexamer acts as an ATP-dependent pump, pulling dsDNA into and through the RuvAB complex. HJ branch migration allows RuvC to scan DNA until it finds its consensus sequence, where it cleaves and resolves the cruciform DNA. The polypeptide is Holliday junction branch migration complex subunit RuvA (Coxiella burnetii (strain CbuG_Q212) (Coxiella burnetii (strain Q212))).